Consider the following 211-residue polypeptide: Leucyl/phenylalanyl-tRNA--protein transferase (211 aa).

It belongs to the L/F-transferase family.

It is found in the cytoplasm. The catalysed reaction is N-terminal L-lysyl-[protein] + L-leucyl-tRNA(Leu) = N-terminal L-leucyl-L-lysyl-[protein] + tRNA(Leu) + H(+). It catalyses the reaction N-terminal L-arginyl-[protein] + L-leucyl-tRNA(Leu) = N-terminal L-leucyl-L-arginyl-[protein] + tRNA(Leu) + H(+). It carries out the reaction L-phenylalanyl-tRNA(Phe) + an N-terminal L-alpha-aminoacyl-[protein] = an N-terminal L-phenylalanyl-L-alpha-aminoacyl-[protein] + tRNA(Phe). Its function is as follows. Functions in the N-end rule pathway of protein degradation where it conjugates Leu, Phe and, less efficiently, Met from aminoacyl-tRNAs to the N-termini of proteins containing an N-terminal arginine or lysine. The chain is Leucyl/phenylalanyl-tRNA--protein transferase from Flavobacterium psychrophilum (strain ATCC 49511 / DSM 21280 / CIP 103535 / JIP02/86).